The primary structure comprises 274 residues: MRFRPSIVALLSVCFGLLTFLYSGSAFAVDKSQLTYDDIVNTGLANVCPEISSFTRGTIEVEPNTKYFVSDFCMEPQEYFVKEEPVNKRQKAEYVKGKVLTRQTTSLEQIRGSIAVGADGTLTFKEKDGIDFQPITVLLPGGEEVPFFFTVKNFTGTTEPGFTSINSSTDFVGDFNVPSYRGAGFLDPKARGLYTGYDNAVALPSAADKFRTNKKETPLGKGTLSLQVTQVDGSTGEIAGIFESEQPSDTDLGAKEPLDVKVRGIFYGRVDTDV.

The N-terminal stretch at 1–28 (MRFRPSIVALLSVCFGLLTFLYSGSAFA) is a signal peptide.

This sequence belongs to the PsbO family. As to quaternary structure, PSII is composed of 1 copy each of membrane proteins PsbA, PsbB, PsbC, PsbD, PsbE, PsbF, PsbH, PsbI, PsbJ, PsbK, PsbL, PsbM, PsbT, PsbX, PsbY, PsbZ, Psb30/Ycf12, peripheral proteins PsbO, CyanoQ (PsbQ), PsbU, PsbV and a large number of cofactors. It forms dimeric complexes. Contacts PsbQ.

The protein resides in the cellular thylakoid membrane. Functionally, one of the extrinsic, lumenal subunits of photosystem II (PSII), which stabilize and protect the oxygen-evolving complex. PSII is a light-driven water plastoquinone oxidoreductase, using light energy to abstract electrons from H(2)O, generating a proton gradient subsequently used for ATP formation. Required for dimerization of PSII and for binding of PsbQ to PSII. The protein is Photosystem II extrinsic protein O of Synechocystis sp. (strain ATCC 27184 / PCC 6803 / Kazusa).